We begin with the raw amino-acid sequence, 1342 residues long: DNA-directed RNA polymerase subunit beta (1342 aa).

The protein belongs to the RNA polymerase beta chain family. As to quaternary structure, the RNAP catalytic core consists of 2 alpha, 1 beta, 1 beta' and 1 omega subunit. When a sigma factor is associated with the core the holoenzyme is formed, which can initiate transcription.

The catalysed reaction is RNA(n) + a ribonucleoside 5'-triphosphate = RNA(n+1) + diphosphate. DNA-dependent RNA polymerase catalyzes the transcription of DNA into RNA using the four ribonucleoside triphosphates as substrates. The protein is DNA-directed RNA polymerase subunit beta of Vibrio parahaemolyticus serotype O3:K6 (strain RIMD 2210633).